Here is a 351-residue protein sequence, read N- to C-terminus: MKAAIALSLLGCVFGFSGKAFAGDAWGPCTPADGTTYHYNVDVDVGIPDAAKNVAGTVLPDVLNWSNGQNVSLICECPDSYKNEKDTLVQGVSMLPPSGRTVDSMKYYTLTEELEVATNIRISTSVYGFVPFKNQQALQTTGCNKVITTPYMGGAGLLSFAITKPFIGDSVIPLTLIAELYASKTNKDYGTIPISSVSIQGRVTVTQDCEIKPGTVLDVPFGEFPSSAFKNRQGQMPEGATEQEINLSFDCNNISDGIKVALRLEGATNADDPRAVDMGNPDIGVLVKDSSGKILVPNDSSSTTLLNLSSLDSKTHRNAAIRLLALPISTTGKAPKGGTFEGVTTIYLEME.

The N-terminal stretch at 1-22 (MKAAIALSLLGCVFGFSGKAFA) is a signal peptide.

It belongs to the fimbrial protein family.

The protein localises to the fimbrium. Part of the lpfABCC'DE fimbrial operon. LP fimbriae may participate in the interaction with eukaryotic cells by assisting in microcolony formation. This chain is Probable minor fimbrial subunit LpfD (lpfD), found in Escherichia coli O157:H7.